A 476-amino-acid polypeptide reads, in one-letter code: Proline--tRNA ligase 2 (476 aa).

It belongs to the class-II aminoacyl-tRNA synthetase family. ProS type 3 subfamily. Homodimer.

It is found in the cytoplasm. The catalysed reaction is tRNA(Pro) + L-proline + ATP = L-prolyl-tRNA(Pro) + AMP + diphosphate. Its function is as follows. Catalyzes the attachment of proline to tRNA(Pro) in a two-step reaction: proline is first activated by ATP to form Pro-AMP and then transferred to the acceptor end of tRNA(Pro). This is Proline--tRNA ligase 2 from Bacillus cereus (strain ATCC 14579 / DSM 31 / CCUG 7414 / JCM 2152 / NBRC 15305 / NCIMB 9373 / NCTC 2599 / NRRL B-3711).